Reading from the N-terminus, the 197-residue chain is Segregation and condensation protein B (197 aa).

Belongs to the ScpB family. In terms of assembly, homodimer. Homodimerization may be required to stabilize the binding of ScpA to the Smc head domains. Component of a cohesin-like complex composed of ScpA, ScpB and the Smc homodimer, in which ScpA and ScpB bind to the head domain of Smc. The presence of the three proteins is required for the association of the complex with DNA.

It is found in the cytoplasm. Functionally, participates in chromosomal partition during cell division. May act via the formation of a condensin-like complex containing Smc and ScpA that pull DNA away from mid-cell into both cell halves. The polypeptide is Segregation and condensation protein B (Halalkalibacterium halodurans (strain ATCC BAA-125 / DSM 18197 / FERM 7344 / JCM 9153 / C-125) (Bacillus halodurans)).